Reading from the N-terminus, the 161-residue chain is Cytochrome b6-f complex subunit 4 (161 aa).

The next 3 helical transmembrane spans lie at 37–57 (LLYIFPVVILGSIALCVGLAV), 96–116 (LLGVVLMGSIPLGLMLVPFIE), and 132–152 (TVFLFGTLFTLWLGIGATFPI).

It belongs to the cytochrome b family. PetD subfamily. As to quaternary structure, the 4 large subunits of the cytochrome b6-f complex are cytochrome b6, subunit IV (17 kDa polypeptide, PetD), cytochrome f and the Rieske protein, while the 4 small subunits are PetG, PetL, PetM and PetN. The complex functions as a dimer.

It is found in the cellular thylakoid membrane. Its function is as follows. Component of the cytochrome b6-f complex, which mediates electron transfer between photosystem II (PSII) and photosystem I (PSI), cyclic electron flow around PSI, and state transitions. The polypeptide is Cytochrome b6-f complex subunit 4 (Cyanothece sp. (strain PCC 7425 / ATCC 29141)).